Reading from the N-terminus, the 153-residue chain is Endoribonuclease YbeY (153 aa).

Zn(2+) is bound by residues H118, H122, and H128.

The protein belongs to the endoribonuclease YbeY family. It depends on Zn(2+) as a cofactor.

The protein localises to the cytoplasm. Functionally, single strand-specific metallo-endoribonuclease involved in late-stage 70S ribosome quality control and in maturation of the 3' terminus of the 16S rRNA. This chain is Endoribonuclease YbeY, found in Clostridioides difficile (strain 630) (Peptoclostridium difficile).